A 271-amino-acid chain; its full sequence is Ribosomal RNA small subunit methyltransferase A (271 aa).

Residues N18, L20, G45, E66, D91, and N112 each contribute to the S-adenosyl-L-methionine site.

The protein belongs to the class I-like SAM-binding methyltransferase superfamily. rRNA adenine N(6)-methyltransferase family. RsmA subfamily.

The protein localises to the cytoplasm. It carries out the reaction adenosine(1518)/adenosine(1519) in 16S rRNA + 4 S-adenosyl-L-methionine = N(6)-dimethyladenosine(1518)/N(6)-dimethyladenosine(1519) in 16S rRNA + 4 S-adenosyl-L-homocysteine + 4 H(+). In terms of biological role, specifically dimethylates two adjacent adenosines (A1518 and A1519) in the loop of a conserved hairpin near the 3'-end of 16S rRNA in the 30S particle. May play a critical role in biogenesis of 30S subunits. The chain is Ribosomal RNA small subunit methyltransferase A from Vibrio atlanticus (strain LGP32) (Vibrio splendidus (strain Mel32)).